We begin with the raw amino-acid sequence, 388 residues long: tRNA (guanine(26)-N(2))-dimethyltransferase (388 aa).

The region spanning 7–381 (KTVEEGLTKI…APLKKIKEII (375 aa)) is the Trm1 methyltransferase domain. S-adenosyl-L-methionine contacts are provided by R40, R70, D88, D115, and A116. 4 residues coordinate Zn(2+): C248, C251, C268, and C271.

Belongs to the class I-like SAM-binding methyltransferase superfamily. Trm1 family.

It catalyses the reaction guanosine(26) in tRNA + 2 S-adenosyl-L-methionine = N(2)-dimethylguanosine(26) in tRNA + 2 S-adenosyl-L-homocysteine + 2 H(+). In terms of biological role, dimethylates a single guanine residue at position 26 of a number of tRNAs using S-adenosyl-L-methionine as donor of the methyl groups. The protein is tRNA (guanine(26)-N(2))-dimethyltransferase of Methanobrevibacter smithii (strain ATCC 35061 / DSM 861 / OCM 144 / PS).